Consider the following 230-residue polypeptide: Flagellar L-ring protein (230 aa).

An N-terminal signal peptide occupies residues 1–22 (MSPISNFARIALACTVAALLGG). The N-palmitoyl cysteine moiety is linked to residue C23. The S-diacylglycerol cysteine moiety is linked to residue C23.

It belongs to the FlgH family. The basal body constitutes a major portion of the flagellar organelle and consists of four rings (L,P,S, and M) mounted on a central rod.

The protein resides in the cell outer membrane. Its subcellular location is the bacterial flagellum basal body. Its function is as follows. Assembles around the rod to form the L-ring and probably protects the motor/basal body from shearing forces during rotation. This chain is Flagellar L-ring protein, found in Stenotrophomonas maltophilia (strain K279a).